Here is a 238-residue protein sequence, read N- to C-terminus: Riboflavin synthase (238 aa).

Lumazine-binding repeat units follow at residues 1-103 and 104-205; these read MFTG…FGGH and YVQG…EKQI. Residues 4-6, 54-56, and 68-73 each bind 2,4-dihydroxypteridine; these read GIV, CLT, and GISPET. At Ser95 the chain carries Phosphoserine. Residues 107–109, Lys143, 152–154, and 170–175 contribute to the 2,4-dihydroxypteridine site; these read GHV, SLT, and SMIKHT.

Homotrimer.

It carries out the reaction 2 6,7-dimethyl-8-(1-D-ribityl)lumazine + H(+) = 5-amino-6-(D-ribitylamino)uracil + riboflavin. Its pathway is cofactor biosynthesis; riboflavin biosynthesis; riboflavin from 2-hydroxy-3-oxobutyl phosphate and 5-amino-6-(D-ribitylamino)uracil: step 2/2. In terms of biological role, catalyzes the dismutation of two molecules of 6,7-dimethyl-8-ribityllumazine, resulting in the formation of riboflavin and 5-amino-6-(D-ribitylamino)uracil. The protein is Riboflavin synthase of Saccharomyces cerevisiae (strain ATCC 204508 / S288c) (Baker's yeast).